A 272-amino-acid polypeptide reads, in one-letter code: Ribonuclease HII (272 aa).

An RNase H type-2 domain is found at 87–272 (KYVAGVDEVG…HRMSFLKNIL (186 aa)). Residues aspartate 93, glutamate 94, and aspartate 188 each coordinate a divalent metal cation.

The protein belongs to the RNase HII family. It depends on Mn(2+) as a cofactor. Mg(2+) is required as a cofactor.

It localises to the cytoplasm. The catalysed reaction is Endonucleolytic cleavage to 5'-phosphomonoester.. Functionally, endonuclease that specifically degrades the RNA of RNA-DNA hybrids. The protein is Ribonuclease HII of Clostridium perfringens (strain ATCC 13124 / DSM 756 / JCM 1290 / NCIMB 6125 / NCTC 8237 / Type A).